Here is a 102-residue protein sequence, read N- to C-terminus: NADH-quinone oxidoreductase subunit K (102 aa).

3 helical membrane passes run 6–26, 30–50, and 62–82; these read MEHG…GLMV, ILFV…AFVV, and IMFI…LAIL.

It belongs to the complex I subunit 4L family. As to quaternary structure, NDH-1 is composed of 13 different subunits. Subunits NuoA, H, J, K, L, M, N constitute the membrane sector of the complex.

The protein localises to the cell inner membrane. The enzyme catalyses a quinone + NADH + 5 H(+)(in) = a quinol + NAD(+) + 4 H(+)(out). In terms of biological role, NDH-1 shuttles electrons from NADH, via FMN and iron-sulfur (Fe-S) centers, to quinones in the respiratory chain. The immediate electron acceptor for the enzyme in this species is believed to be ubiquinone. Couples the redox reaction to proton translocation (for every two electrons transferred, four hydrogen ions are translocated across the cytoplasmic membrane), and thus conserves the redox energy in a proton gradient. The sequence is that of NADH-quinone oxidoreductase subunit K from Azotobacter vinelandii (strain DJ / ATCC BAA-1303).